A 203-amino-acid polypeptide reads, in one-letter code: Small ribosomal subunit protein uS4c (203 aa).

The 69-residue stretch at 91–159 (MRLDNIIFRL…ISKNIEFYQK (69 aa)) folds into the S4 RNA-binding domain.

The protein belongs to the universal ribosomal protein uS4 family. In terms of assembly, part of the 30S ribosomal subunit. Contacts protein S5. The interaction surface between S4 and S5 is involved in control of translational fidelity.

It is found in the plastid. The protein localises to the chloroplast. Functionally, one of the primary rRNA binding proteins, it binds directly to 16S rRNA where it nucleates assembly of the body of the 30S subunit. In terms of biological role, with S5 and S12 plays an important role in translational accuracy. The polypeptide is Small ribosomal subunit protein uS4c (rps4) (Lopidium concinnum (Moss)).